Consider the following 594-residue polypeptide: Potassium-transporting ATPase potassium-binding subunit (594 aa).

Transmembrane regions (helical) follow at residues 4-24 (QFFG…PFLG), 65-85 (QYAV…YALQ), 136-156 (ALTV…FALI), 179-199 (LYVL…QGVI), 287-307 (LEML…GEMV), 314-334 (VAIL…TQNA), 361-381 (FGVA…CGAV), 390-410 (AMGG…FGGV), 413-433 (GLYG…LMIG), 450-470 (MVSI…ALAV), 518-538 (LLGL…LALA), and 560-580 (LFIV…YVPA).

The protein belongs to the KdpA family. The system is composed of three essential subunits: KdpA, KdpB and KdpC.

It is found in the cell inner membrane. Its function is as follows. Part of the high-affinity ATP-driven potassium transport (or Kdp) system, which catalyzes the hydrolysis of ATP coupled with the electrogenic transport of potassium into the cytoplasm. This subunit binds the periplasmic potassium ions and delivers the ions to the membrane domain of KdpB through an intramembrane tunnel. This Bordetella avium (strain 197N) protein is Potassium-transporting ATPase potassium-binding subunit.